Consider the following 656-residue polypeptide: DNA ligase (656 aa).

NAD(+) contacts are provided by residues 32-36 (DAVYD) and 81-82 (SL). Lys-112 acts as the N6-AMP-lysine intermediate in catalysis. NAD(+) is bound by residues Arg-133, Glu-167, and Lys-306. Zn(2+) contacts are provided by Cys-400, Cys-403, Cys-416, and Cys-421. Residues 577-656 (KSSSVFNNKT…ELLKRLKELD (80 aa)) form the BRCT domain.

It belongs to the NAD-dependent DNA ligase family. LigA subfamily. The cofactor is Mg(2+). Requires Mn(2+) as cofactor.

It carries out the reaction NAD(+) + (deoxyribonucleotide)n-3'-hydroxyl + 5'-phospho-(deoxyribonucleotide)m = (deoxyribonucleotide)n+m + AMP + beta-nicotinamide D-nucleotide.. Functionally, DNA ligase that catalyzes the formation of phosphodiester linkages between 5'-phosphoryl and 3'-hydroxyl groups in double-stranded DNA using NAD as a coenzyme and as the energy source for the reaction. It is essential for DNA replication and repair of damaged DNA. This is DNA ligase from Helicobacter pylori (strain P12).